The chain runs to 595 residues: Aspartate--tRNA(Asp/Asn) ligase (595 aa).

Glu175 contacts L-aspartate. The aspartate stretch occupies residues Gln199–Lys202. L-aspartate-binding residues include Arg221 and His454. Arg221 to Glu223 serves as a coordination point for ATP. Residue Glu488 coordinates ATP. Arg495 contacts L-aspartate. Position 540-543 (Gly540–Arg543) interacts with ATP.

Belongs to the class-II aminoacyl-tRNA synthetase family. Type 1 subfamily. Homodimer.

The protein resides in the cytoplasm. The catalysed reaction is tRNA(Asx) + L-aspartate + ATP = L-aspartyl-tRNA(Asx) + AMP + diphosphate. Its function is as follows. Aspartyl-tRNA synthetase with relaxed tRNA specificity since it is able to aspartylate not only its cognate tRNA(Asp) but also tRNA(Asn). Reaction proceeds in two steps: L-aspartate is first activated by ATP to form Asp-AMP and then transferred to the acceptor end of tRNA(Asp/Asn). This is Aspartate--tRNA(Asp/Asn) ligase from Rhizobium meliloti (strain 1021) (Ensifer meliloti).